A 369-amino-acid polypeptide reads, in one-letter code: Peptide chain release factor 2 (369 aa).

Glutamine 249 carries the N5-methylglutamine modification.

It belongs to the prokaryotic/mitochondrial release factor family. In terms of processing, methylated by PrmC. Methylation increases the termination efficiency of RF2.

The protein localises to the cytoplasm. Its function is as follows. Peptide chain release factor 2 directs the termination of translation in response to the peptide chain termination codons UGA and UAA. In Corynebacterium diphtheriae (strain ATCC 700971 / NCTC 13129 / Biotype gravis), this protein is Peptide chain release factor 2.